The primary structure comprises 495 residues: uncharacterized protein (495 aa).

An N-terminal signal peptide occupies residues 1-17 (MRTLSLLILFLSTFLFA).

This is an uncharacterized protein from Aquifex aeolicus (strain VF5).